Consider the following 164-residue polypeptide: Dehydrin Rab16C (164 aa).

Over residues 42–51 (MGGHHAGAGG) the composition is skewed to gly residues. Residues 42-164 (MGGHHAGAGG…KIKEKLPGQH (123 aa)) form a disordered region. Residues 105-115 (GNNHQQQQMMG) show a composition bias toward low complexity. A compositionally biased stretch (gly residues) spans 128–138 (GMTGAGTGTGV). Residues 147–164 (GEKKGFMDKIKEKLPGQH) show a composition bias toward basic and acidic residues.

It belongs to the plant dehydrin family.

This chain is Dehydrin Rab16C (RAB16C), found in Oryza sativa subsp. indica (Rice).